A 426-amino-acid chain; its full sequence is Glutamate-1-semialdehyde 2,1-aminomutase (426 aa).

The residue at position 265 (Lys-265) is an N6-(pyridoxal phosphate)lysine.

Belongs to the class-III pyridoxal-phosphate-dependent aminotransferase family. HemL subfamily. Homodimer. The cofactor is pyridoxal 5'-phosphate.

It is found in the cytoplasm. The catalysed reaction is (S)-4-amino-5-oxopentanoate = 5-aminolevulinate. Its pathway is porphyrin-containing compound metabolism; protoporphyrin-IX biosynthesis; 5-aminolevulinate from L-glutamyl-tRNA(Glu): step 2/2. In Shigella sonnei (strain Ss046), this protein is Glutamate-1-semialdehyde 2,1-aminomutase.